A 195-amino-acid chain; its full sequence is MELSEYVQRGIQTLADPGSFDSSAFALLLRAAFQSLLDAQADEAALDHPDLKHIDPVVLKHCHGAAATYILEAGKHRVDKSTLSTYLEDCKFDRERIELFCTEYQNNKNSLEILLGSIGRALPHITDVSWRLEYQIKTNQLHKMCRPGYLVTLNVENADSQSYPEISFSCSMEQLQDLVGKLKDASKSLERATQL.

Residues 124–193 enclose the COMM domain; it reads HITDVSWRLE…DASKSLERAT (70 aa).

The protein belongs to the COMM domain-containing protein 3 family. In terms of assembly, component of the commander complex consisting of the CCC subcomplex and the retriever subcomplex. Component of the CCC (COMMD/CCDC22/CCDC93) subcomplex consisting of COMMD1, COMMD2, COMMD3, COMMD4, COMMD5, COMMD6, COMMD7, COMMD8, COMMD9, COMMD10, CCDC22 and CCDC93; within the complex forms a heterodimer with COMMD2. Interacts with NFKB1/p105. Interacts with CCDC22, CCDC93, SCNN1B, CUL3, CUL4A, CUL4B, CUL5. In terms of tissue distribution, expressed in kidney collecting duct cells and in the nuclei of proximal convoluted tubule cells in the kidney cortex (at protein level).

The protein localises to the cytoplasm. Its subcellular location is the nucleus. Functionally, scaffold protein in the commander complex that is essential for endosomal recycling of transmembrane cargos; the commander complex is composed of the CCC subcomplex and the retriever subcomplex. May modulate activity of cullin-RING E3 ubiquitin ligase (CRL) complexes. May down-regulate activation of NF-kappa-B. Modulates Na(+) transport in epithelial cells by regulation of apical cell surface expression of amiloride-sensitive sodium channel (ENaC) subunits. The protein is COMM domain-containing protein 3 (Commd3) of Rattus norvegicus (Rat).